We begin with the raw amino-acid sequence, 89 residues long: Large ribosomal subunit protein eL43 (89 aa).

Positions 38, 41, 56, and 59 each coordinate Zn(2+). The C4-type zinc finger occupies 38 to 59 (CPSCDRPGVKRESRGIWKCRKC).

Belongs to the eukaryotic ribosomal protein eL43 family. Putative zinc-binding subfamily. As to quaternary structure, part of the 50S ribosomal subunit. Zn(2+) is required as a cofactor.

Binds to the 23S rRNA. The protein is Large ribosomal subunit protein eL43 of Methanothermobacter thermautotrophicus (strain ATCC 29096 / DSM 1053 / JCM 10044 / NBRC 100330 / Delta H) (Methanobacterium thermoautotrophicum).